Consider the following 467-residue polypeptide: Phosphomethylpyrimidine synthase (467 aa).

Residues asparagine 80, methionine 109, tyrosine 139, histidine 175, 195–197 (SRG), 236–239 (DSLR), and glutamate 275 each bind substrate. Residue histidine 279 coordinates Zn(2+). Tyrosine 302 provides a ligand contact to substrate. Histidine 343 lines the Zn(2+) pocket. 3 residues coordinate [4Fe-4S] cluster: cysteine 423, cysteine 426, and cysteine 431.

Belongs to the ThiC family. Requires [4Fe-4S] cluster as cofactor.

The enzyme catalyses 5-amino-1-(5-phospho-beta-D-ribosyl)imidazole + S-adenosyl-L-methionine = 4-amino-2-methyl-5-(phosphooxymethyl)pyrimidine + CO + 5'-deoxyadenosine + formate + L-methionine + 3 H(+). The protein operates within cofactor biosynthesis; thiamine diphosphate biosynthesis. In terms of biological role, catalyzes the synthesis of the hydroxymethylpyrimidine phosphate (HMP-P) moiety of thiamine from aminoimidazole ribotide (AIR) in a radical S-adenosyl-L-methionine (SAM)-dependent reaction. This is Phosphomethylpyrimidine synthase from Synechococcus sp. (strain WH7803).